The primary structure comprises 101 residues: MAHNHDHDHEHEVITLVDEQGNESLFEILLTIDGKEEFGKNYVLLVPAGSEEDEAGEIEIQAYSFTENEDGTEGDLQPIPEDSDAEWDMIEEVFNSFLDEE.

This sequence belongs to the UPF0473 family.

The protein is UPF0473 protein SUB1774 of Streptococcus uberis (strain ATCC BAA-854 / 0140J).